The sequence spans 597 residues: FERM domain-containing protein 3 (597 aa).

The FERM domain occupies 32 to 312 (MRCTIRLLDD…ENQAFYKYAK (281 aa)). The interval 383-403 (LLPSPSEQEEELPLGEGVPLP) is disordered. The chain crosses the membrane as a helical span at residues 531–551 (LLVVGLGLLLFVFPLLLLLLE).

In terms of tissue distribution, ovary-specific.

The protein resides in the membrane. Putative tumor suppressor gene that may be implicated in the origin and progression of lung cancer. In Homo sapiens (Human), this protein is FERM domain-containing protein 3 (FRMD3).